We begin with the raw amino-acid sequence, 119 residues long: Methylglyoxal synthase (119 aa).

The 119-residue stretch at 1-119 (MKIALIAHDK…ESAKLIMADI (119 aa)) folds into the MGS-like domain. Substrate-binding positions include His-8, Lys-12, 34–37 (TGTT), and 54–55 (SG). Catalysis depends on Asp-60, which acts as the Proton donor/acceptor. His-87 contributes to the substrate binding site.

Belongs to the methylglyoxal synthase family.

The enzyme catalyses dihydroxyacetone phosphate = methylglyoxal + phosphate. Catalyzes the formation of methylglyoxal from dihydroxyacetone phosphate. The protein is Methylglyoxal synthase of Clostridium perfringens (strain 13 / Type A).